A 380-amino-acid chain; its full sequence is Tryptophan--tRNA ligase 2 (380 aa).

The 'HIGH' region signature appears at 74-82 (PSGPMHLGH). The 'KMSKS' region motif lies at 249-253 (KMSSS).

It belongs to the class-I aminoacyl-tRNA synthetase family.

The protein localises to the cytoplasm. It catalyses the reaction tRNA(Trp) + L-tryptophan + ATP = L-tryptophyl-tRNA(Trp) + AMP + diphosphate + H(+). This is Tryptophan--tRNA ligase 2 from Halobacterium salinarum (strain ATCC 700922 / JCM 11081 / NRC-1) (Halobacterium halobium).